Here is a 311-residue protein sequence, read N- to C-terminus: Maspardin (311 aa).

The region spanning 86-159 (EFCDGFRKLL…NSFWLMPSFM (74 aa)) is the AB hydrolase-1 domain.

This sequence belongs to the AB hydrolase superfamily.

It is found in the cytoplasm. The sequence is that of Maspardin (spg21) from Danio rerio (Zebrafish).